The chain runs to 474 residues: Trigger factor (474 aa).

The PPIase FKBP-type domain maps to 171 to 258 (GDVAVIDFQG…LKELKTRDLP (88 aa)). Residues 441-474 (TEVDAASATVETTATETAEEAPEAPKAKKGKKKA) form a disordered region. The span at 444–456 (DAASATVETTATE) shows a compositional bias: low complexity.

The protein belongs to the FKBP-type PPIase family. Tig subfamily.

It is found in the cytoplasm. It carries out the reaction [protein]-peptidylproline (omega=180) = [protein]-peptidylproline (omega=0). Its function is as follows. Involved in protein export. Acts as a chaperone by maintaining the newly synthesized protein in an open conformation. Functions as a peptidyl-prolyl cis-trans isomerase. The chain is Trigger factor from Synechococcus elongatus (strain ATCC 33912 / PCC 7942 / FACHB-805) (Anacystis nidulans R2).